A 304-amino-acid chain; its full sequence is Protein Largen (304 aa).

Positions 1–22 (MSAKSKGNPSSSSAAEGPPAAS) are enriched in low complexity. Disordered regions lie at residues 1 to 27 (MSAK…TKVK), 66 to 109 (QLED…PPAH), 114 to 133 (LTVL…TPVR), and 236 to 304 (EPVH…TTTV). Residues 33–70 (IVEDLELVLGDLKDVAKELKEVVDQIDTLTSDLQLEDE) are a coiled coil. Residues 77–91 (TDTLNSSSSGTTASS) show a composition bias toward low complexity. Composition is skewed to pro residues over residues 120-129 (PNPPPPPPRL) and 275-289 (FPPP…PAAP).

Functionally, regulator of cell size that promotes cell size increase independently of mTOR and Hippo signaling pathways. Acts by stimulating the translation of specific mRNAs, including those encoding proteins affecting mitochondrial functions. Increases mitochondrial mass and respiration. The polypeptide is Protein Largen (Prr16) (Mus musculus (Mouse)).